Reading from the N-terminus, the 433-residue chain is MKILLIGGGGREHAIAEGIKKSKHNPSLYALMAKKNPGIAALCEDFLLEKETEVEKVVEYAKARNIEMAFVGPEAPLAAGVADALWEAGIPVVGPKKSCAIIEFDKAWARNFMKKYGIEGCPEYEVFTEEKPAHDFIEKLGDVAVKPSGLTGGKGVKVMGDQLPDLKAAKAYTSELLEKGSVVIEERFIGEEFTLQAFVDGKSLVFFPAVQDHKRAYEGDLGPNTGGMGSYTDAGEILPFMLPEDLEKAKKIMQDTVKALSEETGIGYQGILYGQFILTASGPKVVEFNARFGDPEAMNVISLLETDFVDIMSAVVKGTLGNLPVSFSKKATVCKYAVPAGYPENPEKDSEVTVEDIGDASIYYASVYEKEGKVYTTSSRAIAVIGIAETIAAAEKIAQNALENLHGKLFFRKDIGTAALIQKRIDHMKELRG.

An ATP-grasp domain is found at 110–317 (RNFMKKYGIE…FVDIMSAVVK (208 aa)). 137-194 (IEKLGDVAVKPSGLTGGKGVKVMGDQLPDLKAAKAYTSELLEKGSVVIEERFIGEEFT) contacts ATP. Mg(2+)-binding residues include Gln275, Glu287, and Asn289. Residues Gln275, Glu287, and Asn289 each contribute to the Mn(2+) site.

It belongs to the GARS family. The cofactor is Mg(2+). Requires Mn(2+) as cofactor.

It carries out the reaction 5-phospho-beta-D-ribosylamine + glycine + ATP = N(1)-(5-phospho-beta-D-ribosyl)glycinamide + ADP + phosphate + H(+). Its pathway is purine metabolism; IMP biosynthesis via de novo pathway; N(1)-(5-phospho-D-ribosyl)glycinamide from 5-phospho-alpha-D-ribose 1-diphosphate: step 2/2. The protein is Phosphoribosylamine--glycine ligase of Methanosarcina barkeri (strain Fusaro / DSM 804).